The primary structure comprises 409 residues: Pleckstrin homology domain-containing family O member 1 (409 aa).

The tract at residues 1–20 (MMKKNNSTKRGPQDGNHQCA) is disordered. Residues 21 to 132 (PPEKVGWVRK…WINALNSAIT (112 aa)) enclose the PH domain. The interval 133–193 (RAKNRVLDEV…MLTLDLIQEE (61 aa)) is interaction with capping proteins (CPs). An interaction with ATM, CKIP, IFP35 and NMI region spans residues 136 to 308 (NRVLDEVTVE…PHAPGQLSRI (173 aa)). 3 disordered regions span residues 218 to 304 (LAGS…APGQ), 325 to 350 (EVQG…ESEQ), and 390 to 409 (TPDS…KSLM). A phosphoserine mark is found at serine 227 and serine 271. The segment at 308 to 409 (IQDLVARKLE…QHSQYRKSLM (102 aa)) is negative regulator of AP-1 activity. Basic and acidic residues predominate over residues 331-340 (DGKRKAKEPP). Serine 342 bears the Phosphoserine mark. A compositionally biased stretch (polar residues) spans 390–402 (TPDSHLRQTTQHS).

As to quaternary structure, heterodimer or homodimer. Interacts with CK2 and actin capping subunits (capping protein CP-alpha and CP-beta). CKIP1 and CK2 together inhibit the activity of actin capping protein at the barbed ends of actin filaments. Interacts with ATM, IFP35, JUN, JUND, NMI and PI3K. Interacts with AKT1, AKT2 and AKT3 (each isozyme of PKB), PtdIns(3,5)P2, PtdIns(4,5)P2 and PtdIns(3,4,5)P2. Post-translationally, C-terminal fragments could be released during apoptosis via caspase-3-dependent cleavage.

It localises to the membrane. It is found in the nucleus. Its subcellular location is the cytoplasm. Functionally, plays a role in the regulation of the actin cytoskeleton through its interactions with actin capping protein (CP). May function to target CK2 to the plasma membrane thereby serving as an adapter to facilitate the phosphorylation of CP by protein kinase 2 (CK2). Appears to target ATM to the plasma membrane. Also implicated in PI3K-regulated muscle differentiation, the regulation of AP-1 activity (plasma membrane bound AP-1 regulator that translocates to the nucleus) and the promotion of apoptosis induced by tumor necrosis factor TNF. When bound to PKB, it inhibits it probably by decreasing PKB level of phosphorylation. This is Pleckstrin homology domain-containing family O member 1 (PLEKHO1) from Bos taurus (Bovine).